Reading from the N-terminus, the 197-residue chain is Protein LURP-one-related 9 (197 aa).

It belongs to the LOR family.

Functionally, might be related to the phospholipid scramblase and tubby-like superfamily of membrane tethered transcription factors. This chain is Protein LURP-one-related 9, found in Arabidopsis thaliana (Mouse-ear cress).